A 95-amino-acid polypeptide reads, in one-letter code: Small ribosomal subunit protein uS19 (95 aa).

Belongs to the universal ribosomal protein uS19 family.

Functionally, protein S19 forms a complex with S13 that binds strongly to the 16S ribosomal RNA. The chain is Small ribosomal subunit protein uS19 from Syntrophobacter fumaroxidans (strain DSM 10017 / MPOB).